The chain runs to 247 residues: uncharacterized protein (247 aa).

Helical transmembrane passes span 9 to 29 (IIAI…FLIF) and 37 to 57 (SYFL…SLII).

Its subcellular location is the cell membrane. This is an uncharacterized protein from Methanocaldococcus jannaschii (strain ATCC 43067 / DSM 2661 / JAL-1 / JCM 10045 / NBRC 100440) (Methanococcus jannaschii).